The following is a 419-amino-acid chain: 26S proteasome regulatory subunit 8 homolog A (419 aa).

An N-acetylalanine modification is found at Ala-2. 202-209 (GPPGTGKT) contacts ATP. Lys-406 participates in a covalent cross-link: Glycyl lysine isopeptide (Lys-Gly) (interchain with G-Cter in ubiquitin).

This sequence belongs to the AAA ATPase family. As to quaternary structure, component of the 19S regulatory particle (RP/PA700) base subcomplex of the 26S proteasome. The 26S proteasome is composed of a core protease (CP), known as the 20S proteasome, capped at one or both ends by the 19S regulatory particle (RP/PA700). The RP/PA700 complex is composed of at least 17 different subunits in two subcomplexes, the base and the lid, which form the portions proximal and distal to the 20S proteolytic core, respectively.

Its subcellular location is the cytoplasm. It is found in the nucleus. The 26S proteasome is involved in the ATP-dependent degradation of ubiquitinated proteins. The regulatory (or ATPase) complex confers ATP dependency and substrate specificity to the 26S complex. This chain is 26S proteasome regulatory subunit 8 homolog A (RPT6A), found in Arabidopsis thaliana (Mouse-ear cress).